Reading from the N-terminus, the 408-residue chain is Probable pectate lyase 18 (408 aa).

Residues 1-24 (MKMQTKKLFITIVSFLLYAPLFLS) form the signal peptide. N-linked (GlcNAc...) asparagine glycosylation is present at Asn42. Ca(2+)-binding residues include Asp206, Asp230, and Asp234. Arg286 is an active-site residue.

This sequence belongs to the polysaccharide lyase 1 family. It depends on Ca(2+) as a cofactor. Expressed in flowers, but not in leaves.

The catalysed reaction is Eliminative cleavage of (1-&gt;4)-alpha-D-galacturonan to give oligosaccharides with 4-deoxy-alpha-D-galact-4-enuronosyl groups at their non-reducing ends.. Its pathway is glycan metabolism; pectin degradation; 2-dehydro-3-deoxy-D-gluconate from pectin: step 2/5. The polypeptide is Probable pectate lyase 18 (Arabidopsis thaliana (Mouse-ear cress)).